The sequence spans 167 residues: uncharacterized protein (167 aa).

Over residues 1 to 10 (MPLRRCRAWR) the composition is skewed to basic residues. A disordered region spans residues 1–23 (MPLRRCRAWRGHSQPGTGSRSNE).

This is an uncharacterized protein from Sinorhizobium fredii (strain NBRC 101917 / NGR234).